A 411-amino-acid chain; its full sequence is MSTATLSQETKQIVKATVPILAEHGEAITKHFYKRMFSHHPELLNIFNQTHQKQGRQPQALANSIYAAAEHIDNLEAILPVVSRIAHKHRSLNIKPEQYPIVGENLLAAMREVLGDAASDDVLEAWREAYELIADVFIQVEKKMYEEASQAPGGWREFRSFVVEKKQRESATITSFYLKPEDGKALASYKPGQYITVKVTIPGHEHTHMRQYSLSDAPEKGYYRITVKREEGDGDLPPGIVSNYLHQHIHEGDVLEITAPAGDFTLQEEGERPIVFISGGVGITPLMSMFNTLMQRGVKREVIFIHAAINGFYHAMHDHLAQTASQQENVHYAVCYERPTPGDRMNPFMKKEGFIDESFLRSILHDREADFYFCGPVPFMKTIAQILKDWDVPEQQVHYEFFGPAGTLASS.

The 138-residue stretch at 5–142 folds into the Globin domain; the sequence is TLSQETKQIV…IADVFIQVEK (138 aa). His89 lines the heme b pocket. Active-site charge relay system residues include Tyr99 and Glu141. Residues 153-411 are reductase; the sequence is GGWREFRSFV…FGPAGTLASS (259 aa). Residues 156–267 enclose the FAD-binding FR-type domain; it reads REFRSFVVEK…TAPAGDFTLQ (112 aa). FAD is bound by residues Tyr194 and 210–213; that span reads RQYS. 280-285 contributes to the NADP(+) binding site; that stretch reads GVGITP. 401–404 lines the FAD pocket; that stretch reads FFGP.

Belongs to the globin family. Two-domain flavohemoproteins subfamily. It in the C-terminal section; belongs to the flavoprotein pyridine nucleotide cytochrome reductase family. The cofactor is heme b. Requires FAD as cofactor.

The catalysed reaction is 2 nitric oxide + NADPH + 2 O2 = 2 nitrate + NADP(+) + H(+). It catalyses the reaction 2 nitric oxide + NADH + 2 O2 = 2 nitrate + NAD(+) + H(+). In terms of biological role, is involved in NO detoxification in an aerobic process, termed nitric oxide dioxygenase (NOD) reaction that utilizes O(2) and NAD(P)H to convert NO to nitrate, which protects the bacterium from various noxious nitrogen compounds. Therefore, plays a central role in the inducible response to nitrosative stress. The chain is Flavohemoprotein from Halalkalibacterium halodurans (strain ATCC BAA-125 / DSM 18197 / FERM 7344 / JCM 9153 / C-125) (Bacillus halodurans).